We begin with the raw amino-acid sequence, 193 residues long: Interleukin-23 subunit alpha (193 aa).

Positions 1 to 22 (MLGSRAVMLMLLLLLLPWTSQG) are cleaved as a signal peptide.

The protein belongs to the IL-6 superfamily. Heterodimer with IL12B; disulfide-linked. The heterodimer is known as interleukin IL-23. Interacts with IL23R; this interaction enables recruitment of IL12RB1.

The protein localises to the secreted. Its function is as follows. Associates with IL12B to form the pro-inflammatory cytokine IL-23 that plays different roles in innate and adaptive immunity. Released by antigen-presenting cells such as dendritic cells or macrophages, binds to a heterodimeric receptor complex composed of IL12RB1 and IL23R to activate JAK2 and TYK2 which then phosphorylate the receptor to form a docking site leading to the phosphorylation of STAT3 and STAT4. This process leads to activation of several pathways including p38 MAPK or NF-kappa-B and promotes the production of pro-inflammatory cytokines such as interleukin-17A/IL17A. In turn, participates in the early and effective intracellular bacterial clearance. Promotes the expansion and survival of T-helper 17 cells, a CD4-positive helper T-cell subset that produces IL-17, as well as other IL-17-producing cells. The protein is Interleukin-23 subunit alpha (IL23A) of Sus scrofa (Pig).